We begin with the raw amino-acid sequence, 274 residues long: Thymidylate synthase (274 aa).

R21 contacts dUMP. (6R)-5,10-methylene-5,6,7,8-tetrahydrofolate is bound at residue H51. 123 to 124 is a dUMP binding site; it reads RR. The active-site Nucleophile is the C156. DUMP-binding positions include 176–179, N187, and 217–219; these read RSAD and HIY. D179 contributes to the (6R)-5,10-methylene-5,6,7,8-tetrahydrofolate binding site. S273 lines the (6R)-5,10-methylene-5,6,7,8-tetrahydrofolate pocket.

It belongs to the thymidylate synthase family. Bacterial-type ThyA subfamily. As to quaternary structure, homodimer.

Its subcellular location is the cytoplasm. It carries out the reaction dUMP + (6R)-5,10-methylene-5,6,7,8-tetrahydrofolate = 7,8-dihydrofolate + dTMP. The protein operates within pyrimidine metabolism; dTTP biosynthesis. Its function is as follows. Catalyzes the reductive methylation of 2'-deoxyuridine-5'-monophosphate (dUMP) to 2'-deoxythymidine-5'-monophosphate (dTMP) while utilizing 5,10-methylenetetrahydrofolate (mTHF) as the methyl donor and reductant in the reaction, yielding dihydrofolate (DHF) as a by-product. This enzymatic reaction provides an intracellular de novo source of dTMP, an essential precursor for DNA biosynthesis. The chain is Thymidylate synthase from Francisella tularensis subsp. novicida (strain U112).